The chain runs to 417 residues: Serine hydroxymethyltransferase (417 aa).

(6S)-5,6,7,8-tetrahydrofolate contacts are provided by residues Leu-120 and 124 to 126; that span reads GHL. Lys-229 bears the N6-(pyridoxal phosphate)lysine mark.

Belongs to the SHMT family. In terms of assembly, homodimer. The cofactor is pyridoxal 5'-phosphate.

The protein resides in the cytoplasm. The catalysed reaction is (6R)-5,10-methylene-5,6,7,8-tetrahydrofolate + glycine + H2O = (6S)-5,6,7,8-tetrahydrofolate + L-serine. The protein operates within one-carbon metabolism; tetrahydrofolate interconversion. It participates in amino-acid biosynthesis; glycine biosynthesis; glycine from L-serine: step 1/1. Its function is as follows. Catalyzes the reversible interconversion of serine and glycine with tetrahydrofolate (THF) serving as the one-carbon carrier. This reaction serves as the major source of one-carbon groups required for the biosynthesis of purines, thymidylate, methionine, and other important biomolecules. Also exhibits THF-independent aldolase activity toward beta-hydroxyamino acids, producing glycine and aldehydes, via a retro-aldol mechanism. This Anaeromyxobacter dehalogenans (strain 2CP-C) protein is Serine hydroxymethyltransferase.